A 581-amino-acid chain; its full sequence is Frizzled-8 (581 aa).

The signal sequence occupies residues 1–23 (MESLSLSLLLLVSWLQGSQCAAA). Positions 24-144 (KELSCQEITV…GNPDTLCMDY (121 aa)) constitute an FZ domain. The Extracellular segment spans residues 24–239 (KELSCQEITV…PEERTFTEFW (216 aa)). Intrachain disulfides connect Cys-28/Cys-89, Cys-36/Cys-82, Cys-73/Cys-111, Cys-100/Cys-141, and Cys-104/Cys-128. Asn-42 carries N-linked (GlcNAc...) asparagine glycosylation. Residue 64–71 (QFWPLVVI) participates in hexadecanoate binding. The segment at 88 to 93 (ICLEDY) is wnt-binding. Positions 140-146 (LCMDYYN) are wnt-binding. Residue Asn-146 is glycosylated (N-linked (GlcNAc...) asparagine). The interval 151–189 (TTAAPSHPEPPKPPARSVPKGRTRVEPPRSRSRATGCES) is disordered. A compositionally biased stretch (pro residues) spans 157–166 (HPEPPKPPAR). Residues 240–260 (IGLWSVLCFASTFATVSTFLI) form a helical membrane-spanning segment. Topologically, residues 261-271 (DMERFKYPERP) are cytoplasmic. The helical transmembrane segment at 272-292 (IIFLSACYLLVSTGYLIRLIA) threads the bilayer. The Extracellular portion of the chain corresponds to 293–320 (GHEKVACSRGELDLEHIIHYETTGPALC). A helical membrane pass occupies residues 321–341 (TLVFLLIYFFGMASSIWWVIL). The Cytoplasmic portion of the chain corresponds to 342-377 (SLTWFLAAGMKWGNEAIAGYSQYFHLAAWLVPSIKS). Residues 378-398 (IAVLALSSVDGDPVAGICFVG) form a helical membrane-spanning segment. Residues 399-407 (NQNLDNLRG) are Extracellular-facing. A helical transmembrane segment spans residues 408–428 (FVLAPLVIYLFIGSMFLLAGF). Residues 429–454 (VSLFRIRSVIKQGGTKTDKLEKLMIR) are Cytoplasmic-facing. Residues 455 to 475 (IGIFSVLYTVPATIVVACFFY) traverse the membrane as a helical segment. Residues 476-505 (EQHNRQGWEVAHNCNSCQPEMAQPHRPDYA) are Extracellular-facing. Residues 506-526 (VFMLKYFMCLVVGITSGVWIW) traverse the membrane as a helical segment. Residues 527-581 (SGKTLESWRAFCTRCCWGSKATGGSMYSDVSTGLTWRSGTGSSVSCPKQMPLSQV) are Cytoplasmic-facing. A Lys-Thr-X-X-X-Trp motif, mediates interaction with the PDZ domain of Dvl family members motif is present at residues 529–534 (KTLESW). A PDZ-binding motif is present at residues 579–581 (SQV).

This sequence belongs to the G-protein coupled receptor Fz/Smo family. As to quaternary structure, interacts with lypd6 and the interaction is strongly enhanced by wnt3a.

It is found in the membrane. The protein resides in the cell membrane. In terms of biological role, receptor for Wnt proteins. Most of frizzled receptors are coupled to the beta-catenin canonical signaling pathway, which leads to the activation of disheveled proteins, inhibition of GSK-3 kinase, nuclear accumulation of beta-catenin and activation of Wnt target genes. A second signaling pathway involving PKC and calcium fluxes has been seen for some family members, but it is not yet clear if it represents a distinct pathway or if it can be integrated in the canonical pathway, as PKC seems to be required for Wnt-mediated inactivation of GSK-3 kinase. Both pathways seem to involve interactions with G-proteins. May be involved in transduction and intercellular transmission of polarity information during tissue morphogenesis and/or in differentiated tissues. Activation by Wnt8, Wnt5A or Wnt3A induces expression of beta-catenin target genes. Displays an axis-inducing activity. The protein is Frizzled-8 (fzd8) of Xenopus laevis (African clawed frog).